Consider the following 482-residue polypeptide: Bifunctional protein GlmU (482 aa).

The segment at 1 to 238 is pyrophosphorylase; the sequence is MSATSPAAVV…HREILGINNR (238 aa). UDP-N-acetyl-alpha-D-glucosamine-binding positions include 12 to 15, Lys-26, Gln-79, and 84 to 85; these read LAAG and GT. Mg(2+) is bound at residue Asp-110. UDP-N-acetyl-alpha-D-glucosamine is bound by residues Gly-147, Glu-163, Asn-178, and Asn-236. Residue Asn-236 coordinates Mg(2+). Residues 239–259 are linker; the sequence is LQLAEARRLLNERLLERAMLA. The tract at residues 260-482 is N-acetyltransferase; sequence GVTVVDPAST…ASSQETDGQS (223 aa). UDP-N-acetyl-alpha-D-glucosamine is bound by residues Arg-341 and Lys-359. Residue His-371 is the Proton acceptor of the active site. Tyr-374 and Asn-385 together coordinate UDP-N-acetyl-alpha-D-glucosamine. Acetyl-CoA-binding positions include Ala-388, 394-395, Ser-413, Ala-431, and Arg-448; that span reads NY. The segment at 458 to 482 is disordered; it reads VARKRPGSAAAQAAQASSQETDGQS. A compositionally biased stretch (low complexity) spans 465–476; sequence SAAAQAAQASSQ.

It in the N-terminal section; belongs to the N-acetylglucosamine-1-phosphate uridyltransferase family. The protein in the C-terminal section; belongs to the transferase hexapeptide repeat family. In terms of assembly, homotrimer. Requires Mg(2+) as cofactor.

The protein localises to the cytoplasm. The enzyme catalyses alpha-D-glucosamine 1-phosphate + acetyl-CoA = N-acetyl-alpha-D-glucosamine 1-phosphate + CoA + H(+). It carries out the reaction N-acetyl-alpha-D-glucosamine 1-phosphate + UTP + H(+) = UDP-N-acetyl-alpha-D-glucosamine + diphosphate. It participates in nucleotide-sugar biosynthesis; UDP-N-acetyl-alpha-D-glucosamine biosynthesis; N-acetyl-alpha-D-glucosamine 1-phosphate from alpha-D-glucosamine 6-phosphate (route II): step 2/2. It functions in the pathway nucleotide-sugar biosynthesis; UDP-N-acetyl-alpha-D-glucosamine biosynthesis; UDP-N-acetyl-alpha-D-glucosamine from N-acetyl-alpha-D-glucosamine 1-phosphate: step 1/1. Its pathway is bacterial outer membrane biogenesis; LPS lipid A biosynthesis. Functionally, catalyzes the last two sequential reactions in the de novo biosynthetic pathway for UDP-N-acetylglucosamine (UDP-GlcNAc). The C-terminal domain catalyzes the transfer of acetyl group from acetyl coenzyme A to glucosamine-1-phosphate (GlcN-1-P) to produce N-acetylglucosamine-1-phosphate (GlcNAc-1-P), which is converted into UDP-GlcNAc by the transfer of uridine 5-monophosphate (from uridine 5-triphosphate), a reaction catalyzed by the N-terminal domain. The chain is Bifunctional protein GlmU from Streptomyces griseus subsp. griseus (strain JCM 4626 / CBS 651.72 / NBRC 13350 / KCC S-0626 / ISP 5235).